We begin with the raw amino-acid sequence, 436 residues long: Trigger factor (436 aa).

One can recognise a PPIase FKBP-type domain in the interval 161–248 (TDRVTIDLYG…LKKVEQYRLP (88 aa)).

It belongs to the FKBP-type PPIase family. Tig subfamily.

The protein localises to the cytoplasm. The enzyme catalyses [protein]-peptidylproline (omega=180) = [protein]-peptidylproline (omega=0). In terms of biological role, involved in protein export. Acts as a chaperone by maintaining the newly synthesized protein in an open conformation. Functions as a peptidyl-prolyl cis-trans isomerase. This chain is Trigger factor, found in Baumannia cicadellinicola subsp. Homalodisca coagulata.